The sequence spans 146 residues: Hemoglobin subunit beta (146 aa).

The region spanning 2-146 (EWTQQERSII…VVFALGRKYH (145 aa)) is the Globin domain. Positions 63 and 92 each coordinate heme b.

It belongs to the globin family. In terms of assembly, heterotetramer of two alpha chains and two beta chains. Red blood cells.

Its function is as follows. Involved in oxygen transport from gills to the various peripheral tissues. The protein is Hemoglobin subunit beta (hbb) of Thunnus thynnus (Atlantic bluefin tuna).